We begin with the raw amino-acid sequence, 185 residues long: Intraflagellar transport protein 22 homolog (185 aa).

GTP contacts are provided by residues 10–17, 63–67, and 123–126; these read GPCESGKT, DCGGD, and HKPG. Residue serine 137 is modified to Phosphoserine.

This sequence belongs to the small GTPase superfamily. Rab family. In terms of assembly, component of the IFT complex B, at least composed of IFT20, IFT22, IFT25, IFT27, IFT46, IFT52, TRAF3IP1/IFT54, IFT57, IFT74, IFT80, IFT81, and IFT88. Interacts with IFT88. Interacts with CFAP61.

It is found in the cell projection. It localises to the cilium. Small GTPase-like component of the intraflagellar transport (IFT) complex B. The polypeptide is Intraflagellar transport protein 22 homolog (Ift22) (Mus musculus (Mouse)).